The chain runs to 535 residues: uncharacterized protein (535 aa).

6 helical membrane-spanning segments follow: residues 55-75 (LITIICHLFLLLNIFISIPII), 82-102 (FMPVGFTALAAILLAMQIMFV), 115-135 (IICFLLAIDVLVVFLSPILRH), 143-163 (AFVLWAFLMSLWIVITDLMLF), 201-221 (STILSVILTILTIHTLVTLIM), and 346-366 (VSGPYVLVAHGIGGVYSNVFA).

The protein resides in the membrane. This is an uncharacterized protein from Schizosaccharomyces pombe (strain 972 / ATCC 24843) (Fission yeast).